Reading from the N-terminus, the 316-residue chain is Acetyl-coenzyme A carboxylase carboxyl transferase subunit alpha (316 aa).

In terms of domain architecture, CoA carboxyltransferase C-terminal spans 36–290 (KLEQKLDSLK…KQFLVEQLHI (255 aa)).

It belongs to the AccA family. As to quaternary structure, acetyl-CoA carboxylase is a heterohexamer composed of biotin carboxyl carrier protein (AccB), biotin carboxylase (AccC) and two subunits each of ACCase subunit alpha (AccA) and ACCase subunit beta (AccD).

It is found in the cytoplasm. It catalyses the reaction N(6)-carboxybiotinyl-L-lysyl-[protein] + acetyl-CoA = N(6)-biotinyl-L-lysyl-[protein] + malonyl-CoA. Its pathway is lipid metabolism; malonyl-CoA biosynthesis; malonyl-CoA from acetyl-CoA: step 1/1. Functionally, component of the acetyl coenzyme A carboxylase (ACC) complex. First, biotin carboxylase catalyzes the carboxylation of biotin on its carrier protein (BCCP) and then the CO(2) group is transferred by the carboxyltransferase to acetyl-CoA to form malonyl-CoA. The sequence is that of Acetyl-coenzyme A carboxylase carboxyl transferase subunit alpha from Protochlamydia amoebophila (strain UWE25).